The following is a 189-amino-acid chain: Elongation factor P (189 aa).

Belongs to the elongation factor P family.

Its subcellular location is the cytoplasm. It functions in the pathway protein biosynthesis; polypeptide chain elongation. Involved in peptide bond synthesis. Stimulates efficient translation and peptide-bond synthesis on native or reconstituted 70S ribosomes in vitro. Probably functions indirectly by altering the affinity of the ribosome for aminoacyl-tRNA, thus increasing their reactivity as acceptors for peptidyl transferase. The protein is Elongation factor P of Xanthobacter autotrophicus (strain ATCC BAA-1158 / Py2).